The following is a 572-amino-acid chain: uncharacterized protein (572 aa).

Residues A543–N572 form a disordered region. Over residues S547–T563 the composition is skewed to low complexity.

This is an uncharacterized protein from Acanthamoeba polyphaga (Amoeba).